The following is a 252-amino-acid chain: Carboxy-S-adenosyl-L-methionine synthase (252 aa).

S-adenosyl-L-methionine is bound by residues tyrosine 45, 70–72 (GCS), 95–96 (DN), 127–128 (DI), asparagine 142, and arginine 209.

This sequence belongs to the class I-like SAM-binding methyltransferase superfamily. Cx-SAM synthase family. As to quaternary structure, homodimer.

It catalyses the reaction prephenate + S-adenosyl-L-methionine = carboxy-S-adenosyl-L-methionine + 3-phenylpyruvate + H2O. Catalyzes the conversion of S-adenosyl-L-methionine (SAM) to carboxy-S-adenosyl-L-methionine (Cx-SAM). The chain is Carboxy-S-adenosyl-L-methionine synthase from Pseudomonas paraeruginosa (strain DSM 24068 / PA7) (Pseudomonas aeruginosa (strain PA7)).